The following is a 223-amino-acid chain: Ras-related protein Rab-21 (223 aa).

Residue Ala2 is modified to N-acetylalanine. The GTP site is built by Gly26, Gly29, Lys30, Thr31, Ser32, Asn43, Asp44, His46, Thr48, and Thr49. Thr31 is a binding site for Mg(2+). Residues 41–54 (KFNDKHITTLQASF) carry the Switch 1 motif. Positions 49 and 72 each coordinate Mg(2+). The Switch 2 signature appears at 74–92 (AGQERFHALGPIYYRDSNG). GTP contacts are provided by Gly75, Asn130, Lys131, Asp133, Ala161, and Lys162. 2 S-geranylgeranyl cysteine lipidation sites follow: Cys219 and Cys220. Residue Cys220 is modified to Cysteine methyl ester. A propeptide spans 221 to 223 (SSG) (removed in mature form).

The protein belongs to the small GTPase superfamily. Rab family. Interacts with the cytoplasmic tail of integrins ITGA1, ITGA2, ITGA5, ITGA6, ITGA11 and ITGB1; this interaction is dependent upon its GDP/GTP cycle. Interacts with ANKRD27. Interacts (active GTP-bound form) with TMED10; the interaction is indirect and regulates TMED10 abundance and localization at the Golgi. The cofactor is Mg(2+).

It localises to the endoplasmic reticulum membrane. It is found in the golgi apparatus. Its subcellular location is the trans-Golgi network. The protein resides in the golgi apparatus membrane. The protein localises to the early endosome membrane. It localises to the cytoplasmic vesicle membrane. It is found in the cleavage furrow. Its subcellular location is the cell projection. The protein resides in the neuron projection. It catalyses the reaction GTP + H2O = GDP + phosphate + H(+). Its activity is regulated as follows. Regulated by guanine nucleotide exchange factors (GEFs) including ANKRD27 and RABGEF1, which promote the exchange of bound GDP for free GTP. Regulated by GTPase activating proteins (GAPs) which increase the GTP hydrolysis activity. Inhibited by GDP dissociation inhibitors (GDIs). Functionally, the small GTPases Rab are key regulators of intracellular membrane trafficking, from the formation of transport vesicles to their fusion with membranes. Rabs cycle between an inactive GDP-bound form and an active GTP-bound form that is able to recruit to membranes different sets of downstream effectors directly responsible for vesicle formation, movement, tethering and fusion. RAB21 is involved in membrane trafficking control. Regulates integrin internalization and recycling, but does not influence the traffic of endosomally translocated receptors in general. As a result, may regulate cell adhesion and migration. During the mitosis of adherent cells, controls the endosomal trafficking of integrins which is required for the successful completion of cytokinesis. Involved in neurite growth. Modulates protein levels of the cargo receptors TMED2 and TMED10, and required for appropriate Golgi localization of TMED10. The sequence is that of Ras-related protein Rab-21 (RAB21) from Canis lupus familiaris (Dog).